Consider the following 356-residue polypeptide: Viral cathepsin (356 aa).

The first 40 residues, 1–40 (MYANALVCLNPSFIKLQFHIVCTMNIIGIVTLALCSAASA), serve as a signal peptide directing secretion. The propeptide at 41-144 (ADEGAAYNLQ…IILNQPPDKG (104 aa)) is activation peptide. Intrachain disulfides connect C165/C206, C199/C239, and C295/C343. C168 is a catalytic residue. Active-site residues include H302 and N322.

It belongs to the peptidase C1 family. In terms of processing, synthesized as an inactive proenzyme and activated by proteolytic removal of the inhibitory propeptide.

It catalyses the reaction Endopeptidase of broad specificity, hydrolyzing substrates of both cathepsin L and cathepsin B.. Cysteine protease that plays an essential role in host liquefaction to facilitate horizontal transmission of the virus. May participate in the degradation of foreign protein expressed by the baculovirus system. In Lepidoptera (butterflies and moths), this protein is Viral cathepsin (VCATH).